A 410-amino-acid polypeptide reads, in one-letter code: Lissencephaly-1 homolog B (410 aa).

Residues 7 to 39 (QRDELNRAIADYLRSNGYEEAYSTFKKEAELDM) enclose the LisH domain. Positions 56–82 (TSVIRLQKKVMELESKLNEAKEEITLG) form a coiled coil. WD repeat units follow at residues 106–147 (GHRS…RTLK), 148–187 (GHTD…CIRT), 190–229 (GHDH…CVKT), 232–271 (GHRE…CKAE), 274–333 (EHEH…CLMT), 336–375 (GHDN…CMKT), and 378–410 (AHEH…WECR).

It belongs to the WD repeat LIS1/nudF family. In terms of assembly, can self-associate. Component of the cytosolic PAF-AH (I) heterotetrameric enzyme, which is composed of PAFAH1B1 (beta), PAFAH1B2 (alpha2) and PAFAH1B3 (alpha1) subunits. The catalytic activity of the enzyme resides in the alpha1 (PAFAH1B3) and alpha2 (PAFAH1B2) subunits, whereas the beta subunit (PAFAH1B1) has regulatory activity. Trimer formation is not essential for the catalytic activity. Interacts with dynein, dynactin, nde1 and ndel1.

It is found in the cytoplasm. Its subcellular location is the cytoskeleton. It localises to the microtubule organizing center. The protein resides in the centrosome. Regulatory subunit (beta subunit) of the cytosolic type I platelet-activating factor (PAF) acetylhydrolase (PAF-AH (I)), an enzyme that catalyzes the hydrolyze of the acetyl group at the sn-2 position of PAF and its analogs and participates in PAF inactivation. Regulates the PAF-AH (I) activity in a catalytic dimer composition-dependent manner. Positively regulates the activity of the minus-end directed microtubule motor protein dynein. May enhance dynein-mediated microtubule sliding by targeting dynein to the microtubule plus end. Required for several dynein- and microtubule-dependent processes such as the maintenance of Golgi integrity, the peripheral transport of microtubule fragments and the coupling of the nucleus and centrosome. May be required for proliferation of neuronal precursors and neuronal migration. The protein is Lissencephaly-1 homolog B (pafah1b1-2) of Salmo salar (Atlantic salmon).